Here is a 423-residue protein sequence, read N- to C-terminus: Polyglutamylase complex subunit TTLL1 (423 aa).

One can recognise a TTL domain in the interval 1–367; the sequence is MAGRVKWVTD…NGEIPDCKWN (367 aa). Residues lysine 138, 144–145, 181–184, and 194–196 contribute to the ATP site; these read QG, SVYI, and KFD. Glutamine 144 is a binding site for a protein. Residue arginine 220 coordinates L-glutamate. 241-242 provides a ligand contact to ATP; that stretch reads TN. Lysine 259 lines the L-glutamate pocket. 3 residues coordinate Mg(2+): aspartate 313, glutamate 326, and asparagine 328. Residue lysine 344 coordinates L-glutamate. Residues 390-423 form a disordered region; it reads DGAERELRNRPGQPVGPRAGRSRDSGRSVLTTWK.

The protein belongs to the tubulin polyglutamylase family. As to quaternary structure, part of the neuronal tubulin polyglutamylase complex which contains TPGS1, TPGS2, TTLL1, LRRC49 and NICN1. Interacts with PCM1, CSTPP1 and LRRC49. Requires Mg(2+) as cofactor. In terms of tissue distribution, highly expressed in brain, heart and kidney. Expressed in liver, lung, muscle, spleen, testis and trachea. In the brain, expressed in ependymal cilia, cortex, corpus callosum and striatum. Expressed in blastomere.

Its subcellular location is the cytoplasm. It localises to the cytoskeleton. It is found in the cilium basal body. The protein localises to the cilium axoneme. The protein resides in the cell projection. Its subcellular location is the cilium. It localises to the flagellum. The enzyme catalyses (L-glutamyl)(n)-gamma-L-glutamyl-L-glutamyl-[protein] + L-glutamate + ATP = (L-glutamyl)(n+1)-gamma-L-glutamyl-L-glutamyl-[protein] + ADP + phosphate + H(+). Functionally, catalytic subunit of a polyglutamylase complex which modifies tubulin, generating side chains of glutamate on the gamma-carboxyl group of specific glutamate residues within the C-terminal tail of tubulin. Probably involved in the side-chain elongation step of the polyglutamylation reaction rather than the initiation step. Modifies both alpha- and beta-tubulins with a preference for the alpha-tail. Unlike most polyglutamylases of the tubulin--tyrosine ligase family, only displays a catalytic activity when in complex with other proteins as it is most likely lacking domains important for autonomous activity. Part of the neuronal tubulin polyglutamylase complex. Mediates cilia and flagella polyglutamylation which is essential for their biogenesis and motility. Involved in respiratory motile cilia function through the regulation of beating asymmetry. Essential for sperm flagella biogenesis, motility and male fertility. Also mediates glutamylation of non-tubulin proteins. Involved in KLF4 glutamylation which impedes its ubiquitination, thereby leading to somatic cell reprogramming, pluripotency maintenance and embryogenesis. The sequence is that of Polyglutamylase complex subunit TTLL1 from Mus musculus (Mouse).